A 348-amino-acid polypeptide reads, in one-letter code: tRNA (cytosine(34)-C(5))-methyltransferase, mitochondrial (348 aa).

S-adenosyl-L-methionine is bound by residues 139–145 (CAAPGGK), Glu-162, Asp-193, and Asp-211. The Nucleophile role is filled by Cys-265.

This sequence belongs to the class I-like SAM-binding methyltransferase superfamily. RsmB/NOP family.

The protein resides in the mitochondrion matrix. It catalyses the reaction cytidine(34) in mitochondrial tRNA + S-adenosyl-L-methionine = 5-methylcytidine(34) in mitochondrial tRNA + S-adenosyl-L-homocysteine + H(+). In terms of biological role, mitochondrial tRNA methyltransferase that mediates methylation of cytosine to 5-methylcytosine (m5C) at position 34 of mt-tRNA(Met). mt-tRNA(Met) methylation at cytosine(34) takes place at the wobble position of the anticodon and initiates the formation of 5-formylcytosine (f(5)c) at this position. mt-tRNA(Met) containing the f(5)c modification at the wobble position enables recognition of the AUA codon in addition to the AUG codon, expanding codon recognition in mitochondrial translation. The chain is tRNA (cytosine(34)-C(5))-methyltransferase, mitochondrial from Mus musculus (Mouse).